The primary structure comprises 381 residues: MRGFTLPVWVVAAAKAAVKVLIGESWQSHEVIELLNNEESIVVPIRSASILDNGEKALGITNCDPGECLDLTRGLEIWVCLRYIENQQIISSDGLELEPWLKIIPGYGVGKFDLTNDISISEFARQLLIVNLKPYRKEGYSLNLEIIFPSGQELAEKTSNHAFGVVDGLALIGTQADVQESASPKKLQSTIHALRSRCAESSFTGSLIFVIGENGLDLALQYGIDSSKIIKTGNWLGPLLVAAAQEKVQQLLIFGYHGKLIKLAGGVFHTHHHLADNRLETLIAFAVKERIPLSLIKEFEEAVSIEAALSILENKDISTAKKLWKRLAVEIEKRSIDYVKRYETSSIEIGAVMFDRARKIRWAGNYALKQINSFGLKLEDY.

Belongs to the CbiD family.

It carries out the reaction Co-precorrin-5B + S-adenosyl-L-methionine = Co-precorrin-6A + S-adenosyl-L-homocysteine. The protein operates within cofactor biosynthesis; adenosylcobalamin biosynthesis; cob(II)yrinate a,c-diamide from sirohydrochlorin (anaerobic route): step 6/10. Catalyzes the methylation of C-1 in cobalt-precorrin-5B to form cobalt-precorrin-6A. This Prochlorococcus marinus (strain SARG / CCMP1375 / SS120) protein is Cobalt-precorrin-5B C(1)-methyltransferase.